Here is a 361-residue protein sequence, read N- to C-terminus: Peptide chain release factor 1 (361 aa).

Glutamine 235 is modified (N5-methylglutamine).

The protein belongs to the prokaryotic/mitochondrial release factor family. Methylated by PrmC. Methylation increases the termination efficiency of RF1.

Its subcellular location is the cytoplasm. In terms of biological role, peptide chain release factor 1 directs the termination of translation in response to the peptide chain termination codons UAG and UAA. The protein is Peptide chain release factor 1 of Rhodopseudomonas palustris (strain BisB18).